The sequence spans 440 residues: Deoxyguanosinetriphosphate triphosphohydrolase-like protein (440 aa).

An HD domain is found at 61–256; that stretch reads RLIHSLEVSC…MEAADDLCYS (196 aa).

This sequence belongs to the dGTPase family. Type 3 subfamily.

The chain is Deoxyguanosinetriphosphate triphosphohydrolase-like protein from Synechocystis sp. (strain ATCC 27184 / PCC 6803 / Kazusa).